The primary structure comprises 3535 residues: MAGMEVKEKEEQLLLDTLIGLWSQYLQASELEDASVKDHWLWLLLYNLQFLDDKNLQDAWLNSHFNLMPEELCSYLLEQVYQIISEAKRSQESSPTHEPEQQDKCIKQLRKQHNLAQLILSTPSDCNKILALRTFLTDKLGHHLLTFLLRVDIKLIASQKSLCHLCINLFPNCKWSASNEQLIPMTSIAQFIGSFYLNSQSKKLRRQQQPKSQLPNHISNPIKSSFEDFRGTTRSSDELALLLIQLLTRCVDAEQESQLSVTVHNFALGHLCSSSEQDASGNNDELIKFELLQLIAHCVNNFYVLEQQQPNVHDFNSNFGQLLYALTANRRSPLLAHGVLYIMFGTLHNLVDNGVRELNQIDVRNFDACFEVLQEAAKSTNFSTAIFLHIYKMLLRLTDNLSSQEQHLQSLMESSASTAMPKQQQHPRHKRQRSSQLHCLGATSLSCYFQGKLYHLLPSLEAELQEHSVRSLLRTGSCCCHYNVRNYATCLQLATQLSSSYQKCAYKFLHYNVLHTIFVKRNPQGCPGCEDKLKSPVFHMDLLNIYKDNYKALLNTPAMLLFLKHLKHIAYLLPYDLASGILAEVALPIFRRYKELIESGESKRKISKVTPLQLPSKLENYRALHECLSIFVMYLSDIRLVKAFYNEENIRYMQDLLIIPELQRGVCDLIKVGIDNIAFLGENSQEQITLSRRLIQLQLNSSDRASQLFQALLYKCSKHSRAKFWLDESSTPAKLEGHKPADILYITALQWTLNFELLKTSQLFYNEFAKIYSIPVEMLDDEDEDEVETPTSELLPGEKKLRHGDKNIFDILKLNYNALGCFLMLPKATMGPTTSSTATTPTAGICGSSSLETLVSQLPLAGSTSVSVTTAASSDYADSTLDYASVIGNYDSYSRDMATPSFLQQLLACEPDESTVLFDIRGSQSSKDNPSNSLILPSEEEGATADGIINKLFSIVGSLFGGSPGSGGSANSPTRANIDADFFCLYEPNGECKKLLLKLFEATMAICIKGFQNEEVEKMQKHLRKLRAIILSHATDNWSEHGEQHARDNAVIQTLQTLLKIAELSSTHQEPTGVVNSPSGDSQQPRPRARSFNSGSVELPRLQTVKLPAKNSLATPPTPRRRPNSSEANAGVDADYFSTRASLSCAADSELELSENEHEFYLTADEGYEADGEIADLSESECELNGGVLAANESTWTPFQPSSRYRSHIMHQGLSQLVVQMLAELSLLCIKQPNGWTESLTQLANRLFVIRDYLGGPLCLLKGFAPILSCSDPRLRELQQSILELVTHLNTPEVLQCYYSILASKQPPVDLLMRHMHHISSGSLRKAQPCMELDFPIITDGKIVVTSEPLVSEQIERVRLHHQQCQTNTLFTRAACIFPVTQTRLWQPDGLTLSLWLELRGQQMHRSSMQFNDDETRYSGEDLTKLHLLSLGTNQAMVSIYISNNMQLIFELVKPNEQLAPVRVEEQIEANADTASVISANTQAANGGTIRQALKQTKLALLNSFGQMHLLNGHQASADSTGGYFESSAVQLQHLRLPRHKWMHLVFGLQQQADSVEISIFLDGLEQHTMRLPFRNLRQLTRVHSFQLLALGEGQPTGRSPGSSSSSRSTLDGSTPRYALSNVILFKRRLVDPLLMMNLTAMGPDFTEFTQCQVANWKPNYGFVSLGKLSSSNFGNHLDCMRQLRQARVLVYTAQQPDLVMSYDASQELDMACYGQPHGHMLYGELQQHQAQTLQAATSLSGGLSTLLYLFARIVELTGNASTQALALDLLLQVAHSDAQLYTEFQRQDYLSLIGYVIKSEKCSKDVQLLRSIVNNACSQVLITRKGDSINVNDNTMATLVYPRLMLTVLQRYSDWHRSGATHSDVLDMLFRCILALTRDKHPQRDFNMEQLQKCGLLGALLNLCKVYVIESPSPVQISPYAAECFVQILAVFSGSPPDSSMLDEIMKLLLLLHKPSDCYVTHDRTHFYFLLTAQQPTKERSLVAANLSRVTTSLRRQLHPQPQELDPERAERIKKLRRLHASTSGYRKAVNEFEEHLDQMADCSNLNKSALRLLSPVEATRWRLKFKRRHPTSANSPKRSPLKIARRRIHPHLHLGKIWQPSGHSTPSSGQSSLPNRKTDFYDQLGIIRLQQRLLILLKDFLCLLPDSSVDVVTRHYVKLELLLVLANQRSCAVRQAIIQLVDVLTKRLPSGELNAATKLMHPLHLANQLTIHGCDVGMFEACLAWINGMHCSLTDIQSCDAPVRIRQRFGLPSLLAIAEGTEPQWVFKALLRLYLQNPDDQTCLIEAGLLQCSVKALYKIYSLRVGQSNADESVVELLATIGERAMRSVGQINLVWDILNLLSFYQDKQPQLIMRSFRTAQAQLQLEWLTKFFEPNSFRVAVTNDSSLSHSELRTRVELLIDRCTQFFTVGVGQTTGPNYVASSQELALFQLLVSYGISSNQRCNNFIAWGLQPSRPRDLRSYIVDALWRSQQDEFQRAIICDAKMIKALLWLSLLEDMPEPIENLKPLCDALGIKENDSSWNLVHELDRLDQNRNNMAAKQKTLLEKTVYRFEPLVQQCVESSMVTTRKVAELQNAERKALMCHMKVYDDTYTYTKWLEIIRRMTHEGAPWHSAERAECSWELDDTEGPSRVHTRLRRCHLDIDRRFFMNEYRPGQGHREDLEPYVRPLDYLIASYDQQLNISLNSQILYNFAAKFLPVDGEIEGEIIITDLKLYFLATYRCRYFNVNCDIANITEIWLKRYQHQETAFEILLDTNKSLFFSLQNADDWKIMREVFCDKIVATPDQSKVIAITQQWREGLLTNWEYLMTLNQISGRTYNDLMQYPVFPWVLANYNSEVLDLREGHNFRRLGRPIAVQVEENEKHYISNYTYIDSTNTTMGSLILKPYHYSSHYSNSGTVLHFLVRVPPFTSYFLRYQDNDFDLPDRTFHALNTTWLLASRDSPTDVKELIPEFFCLPEMFENFERFKFGCRQNGERVEDVSLPPWSQRDSRLFVLIHRQALESELVRNQIHNWIDLIFGYKQSGESAVEAINVFHPATYAVFLDSEISDPIEREAVKTMVKTYGQMPRQLFKSPHPASKPLDYSLVGKPIVSTVRGLRWGVYVGSPQLKAPSWANIHKIPGTEHLVSFCNTNVVYALPGRASVMQGAEPDTYNVISWGYDDRIVRIQPLNKPQAKPKNLLHNGTFDDITACGCDVNSNQLWFGHKSGRISVYKCTGGLDSQQRASAKSRQSYARGFSLSYNSAFRKMTNKGIGGGGSERVDEAGNLHPTSSASSVNSSSISSGGDAFQRDGADLNWLGPTLLVRHTDEITCITLSVEFKIAVTAGRDGIAVIWDLNDWSYVRTIARPAEIHQSPITHVAISPTLGDIVTVHTLPQSCNTSTDPKPTAVATRPNSLNVADECFEVTEENLDDFVNVNVNPNGKSILRLHSVNARYVQHLVHEDRILAVCYSYIKEGVGVNVIATAVEGGFVRFWSSWNLSFVSELTTGTSPIRSICYSTHQHLVVLTRESHIQVWESEGLYGNAPKFPQIVYK.

The disordered stretch occupies residues methionine 412–glutamine 436. A WD 1 repeat occupies threonine 689 to glutamate 736. Over residues serine 1066–serine 1096 the composition is skewed to polar residues. Disordered regions lie at residues serine 1066–valine 1132 and glycine 1592–glycine 1613. Positions proline 1596 to threonine 1610 are enriched in low complexity. Residues serine 2686–valine 2784 enclose the BEACH-type PH domain. Residues valine 2784–serine 3081 form the BEACH domain. A disordered region spans residues glycine 3254–glycine 3287. Low complexity predominate over residues serine 3273–serine 3285. WD repeat units lie at residues arginine 3307 to threonine 3346, valine 3442 to glutamate 3486, and threonine 3489 to proline 3527.

As to quaternary structure, interacts with Rab5; the interaction is independent of GDP or GTP. Interacts with msps.

Its subcellular location is the vesicle. The protein localises to the cytoplasm. The protein resides in the cytoskeleton. It localises to the spindle. It is found in the spindle pole. Its function is as follows. Adapter protein that regulates intracellular membrane fusion reactions. Regulates the fusion of lysosome-related organelles. Promotes microtubules nucleation and centrosomal recruitment of microtubule nucleating proteins such as msps. In syncytial embryos, during the formation of yolk granules, suppresses vesicle fusion events with lipid droplets, possibly via interaction with Rab5. In the eye, regulates pigment granules size. In hemocytes, required for the late steps of bacteria phagocytosis. In fat body, required for autophagosome maturation. The polypeptide is Lysosomal-trafficking regulator (Drosophila melanogaster (Fruit fly)).